The sequence spans 156 residues: Ribosomal RNA large subunit methyltransferase H (156 aa).

Residues Leu-73, Gly-104, and 123-128 each bind S-adenosyl-L-methionine; that span reads IGPLTL.

This sequence belongs to the RNA methyltransferase RlmH family. As to quaternary structure, homodimer.

It is found in the cytoplasm. It catalyses the reaction pseudouridine(1915) in 23S rRNA + S-adenosyl-L-methionine = N(3)-methylpseudouridine(1915) in 23S rRNA + S-adenosyl-L-homocysteine + H(+). Its function is as follows. Specifically methylates the pseudouridine at position 1915 (m3Psi1915) in 23S rRNA. This Xanthomonas axonopodis pv. citri (strain 306) protein is Ribosomal RNA large subunit methyltransferase H.